The chain runs to 489 residues: Glycogen synthase (489 aa).

Lys15 contacts ADP-alpha-D-glucose.

It belongs to the glycosyltransferase 1 family. Bacterial/plant glycogen synthase subfamily.

The catalysed reaction is [(1-&gt;4)-alpha-D-glucosyl](n) + ADP-alpha-D-glucose = [(1-&gt;4)-alpha-D-glucosyl](n+1) + ADP + H(+). Its pathway is glycan biosynthesis; glycogen biosynthesis. In terms of biological role, synthesizes alpha-1,4-glucan chains using ADP-glucose. The sequence is that of Glycogen synthase from Francisella tularensis subsp. holarctica (strain FTNF002-00 / FTA).